A 207-amino-acid chain; its full sequence is Imidazole glycerol phosphate synthase subunit HisH (207 aa).

The 207-residue stretch at Met-1–Asn-207 folds into the Glutamine amidotransferase type-1 domain. Cys-79 serves as the catalytic Nucleophile. Residues His-185 and Glu-187 contribute to the active site.

Heterodimer of HisH and HisF.

Its subcellular location is the cytoplasm. It catalyses the reaction 5-[(5-phospho-1-deoxy-D-ribulos-1-ylimino)methylamino]-1-(5-phospho-beta-D-ribosyl)imidazole-4-carboxamide + L-glutamine = D-erythro-1-(imidazol-4-yl)glycerol 3-phosphate + 5-amino-1-(5-phospho-beta-D-ribosyl)imidazole-4-carboxamide + L-glutamate + H(+). The enzyme catalyses L-glutamine + H2O = L-glutamate + NH4(+). It functions in the pathway amino-acid biosynthesis; L-histidine biosynthesis; L-histidine from 5-phospho-alpha-D-ribose 1-diphosphate: step 5/9. Functionally, IGPS catalyzes the conversion of PRFAR and glutamine to IGP, AICAR and glutamate. The HisH subunit catalyzes the hydrolysis of glutamine to glutamate and ammonia as part of the synthesis of IGP and AICAR. The resulting ammonia molecule is channeled to the active site of HisF. In Shouchella clausii (strain KSM-K16) (Alkalihalobacillus clausii), this protein is Imidazole glycerol phosphate synthase subunit HisH.